Consider the following 388-residue polypeptide: Pepsin A-5 (388 aa).

An N-terminal signal peptide occupies residues 1-15; that stretch reads MKWLLLLGLVALSEC. Positions 16 to 62 are cleaved as a propeptide — activation peptide; it reads IMYKVPLIRKKSLRRTLSERGLLKDFLKKHNLNPARKYFPQWEAPTL. In terms of domain architecture, Peptidase A1 spans 76 to 385; that stretch reads YFGTIGIGTP…DRANNQVGLA (310 aa). Residue aspartate 94 is part of the active site. Cysteine 107 and cysteine 112 are disulfide-bonded. Residue serine 130 is modified to Phosphoserine. A disulfide bridge connects residues cysteine 268 and cysteine 272. Aspartate 277 is an active-site residue. Cysteine 311 and cysteine 344 are joined by a disulfide.

The protein belongs to the peptidase A1 family.

It localises to the secreted. It catalyses the reaction Preferential cleavage: hydrophobic, preferably aromatic, residues in P1 and P1' positions. Cleaves 1-Phe-|-Val-2, 4-Gln-|-His-5, 13-Glu-|-Ala-14, 14-Ala-|-Leu-15, 15-Leu-|-Tyr-16, 16-Tyr-|-Leu-17, 23-Gly-|-Phe-24, 24-Phe-|-Phe-25 and 25-Phe-|-Tyr-26 bonds in the B chain of insulin.. Functionally, shows particularly broad specificity; although bonds involving phenylalanine and leucine are preferred, many others are also cleaved to some extent. This chain is Pepsin A-5 (PGA5), found in Homo sapiens (Human).